Consider the following 338-residue polypeptide: Ketol-acid reductoisomerase (NADP(+)) (338 aa).

The KARI N-terminal Rossmann domain maps to 1-181 (MQVYYDKDCD…GGGRTGIIET (181 aa)). NADP(+) contacts are provided by residues 24–27 (YGSQ), Arg47, Ser50, Ser52, and 82–85 (DEFQ). His107 is a catalytic residue. NADP(+) is bound at residue Gly133. The region spanning 182-327 (TFKDETETDL…EKLRAMMPWI (146 aa)) is the KARI C-terminal knotted domain. Residues Asp190, Glu194, Glu226, and Glu230 each contribute to the Mg(2+) site. Ser251 is a substrate binding site.

The protein belongs to the ketol-acid reductoisomerase family. Mg(2+) is required as a cofactor.

It carries out the reaction (2R)-2,3-dihydroxy-3-methylbutanoate + NADP(+) = (2S)-2-acetolactate + NADPH + H(+). It catalyses the reaction (2R,3R)-2,3-dihydroxy-3-methylpentanoate + NADP(+) = (S)-2-ethyl-2-hydroxy-3-oxobutanoate + NADPH + H(+). Its pathway is amino-acid biosynthesis; L-isoleucine biosynthesis; L-isoleucine from 2-oxobutanoate: step 2/4. It participates in amino-acid biosynthesis; L-valine biosynthesis; L-valine from pyruvate: step 2/4. In terms of biological role, involved in the biosynthesis of branched-chain amino acids (BCAA). Catalyzes an alkyl-migration followed by a ketol-acid reduction of (S)-2-acetolactate (S2AL) to yield (R)-2,3-dihydroxy-isovalerate. In the isomerase reaction, S2AL is rearranged via a Mg-dependent methyl migration to produce 3-hydroxy-3-methyl-2-ketobutyrate (HMKB). In the reductase reaction, this 2-ketoacid undergoes a metal-dependent reduction by NADPH to yield (R)-2,3-dihydroxy-isovalerate. This is Ketol-acid reductoisomerase (NADP(+)) from Teredinibacter turnerae (strain ATCC 39867 / T7901).